A 121-amino-acid polypeptide reads, in one-letter code: Griffithsin (121 aa).

In terms of domain architecture, Jacalin-type lectin spans 1–120; that stretch reads SLTHRKFGGS…LDSLDIYYEQ (120 aa).

In terms of biological role, mixed specificity lectin with anti-HIV activity. Binds to HIV envelope glycoproteins, including exterior membrane glycoprotein gp120, and inhibits viral entry into cells. Binding to gp120 is dependent on gp120 being glycosylated, and is inhibited by mannose, glucose and N-acetylglucosamine. This is Griffithsin from Griffithsia sp. (strain Q66D336) (Red alga).